The following is a 465-amino-acid chain: Pancreatic triacylglycerol lipase (465 aa).

The first 16 residues, 1–16 (MLPLWTLSLLLGAVAG), serve as a signal peptide directing secretion. 2 disulfide bridges follow: C20–C26 and C107–C118. S169 functions as the Nucleophile in the catalytic mechanism. N-linked (GlcNAc...) asparagine glycosylation occurs at N183. The active-site Charge relay system is the D193. E204, R207, D209, and D212 together coordinate Ca(2+). C254 and C278 are disulfide-bonded. H280 serves as the catalytic Charge relay system. 3 cysteine pairs are disulfide-bonded: C302–C313, C316–C321, and C449–C465. Positions 355 to 465 (WRYKVSVTLS…EEVLLTLTPC (111 aa)) constitute a PLAT domain.

Belongs to the AB hydrolase superfamily. Lipase family. As to quaternary structure, forms a 1:1 stoichiometric complex with (pro)colipase/CLPS.

It is found in the secreted. The enzyme catalyses a triacylglycerol + H2O = a diacylglycerol + a fatty acid + H(+). It carries out the reaction 1,2,3-tributanoylglycerol + H2O = dibutanoylglycerol + butanoate + H(+). The catalysed reaction is 1,2,3-tri-(9Z-octadecenoyl)-glycerol + H2O = di-(9Z)-octadecenoylglycerol + (9Z)-octadecenoate + H(+). It catalyses the reaction all-trans-retinyl hexadecanoate + H2O = all-trans-retinol + hexadecanoate + H(+). The enzyme catalyses 1,2-di-(9Z-octadecenoyl)-glycerol + H2O = (9Z-octadecenoyl)-glycerol + (9Z)-octadecenoate + H(+). Its activity is regulated as follows. Inhibited by bile salts, is reactivated by (pro)colipase/CLPS. Functionally, plays an important role in fat metabolism. It preferentially splits the esters of long-chain fatty acids at positions 1 and 3, producing mainly 2-monoacylglycerol and free fatty acids, and shows considerably higher activity against insoluble emulsified substrates than against soluble ones. The chain is Pancreatic triacylglycerol lipase from Homo sapiens (Human).